A 602-amino-acid polypeptide reads, in one-letter code: Glutamine--fructose-6-phosphate aminotransferase [isomerizing] (602 aa).

The active-site Nucleophile; for GATase activity is the C2. A Glutamine amidotransferase type-2 domain is found at 2 to 217 (CGIVGVVGNT…DQELVIVKAD (216 aa)). Residues 67 to 87 (IGHTRWATHGKPTEDNAHPHR) form a disordered region. The span at 77–87 (KPTEDNAHPHR) shows a compositional bias: basic and acidic residues. SIS domains are found at residues 283–422 (IIKA…ANGN) and 455–592 (VREL…VDKP). K597 serves as the catalytic For Fru-6P isomerization activity.

In terms of assembly, homodimer.

The protein localises to the cytoplasm. The catalysed reaction is D-fructose 6-phosphate + L-glutamine = D-glucosamine 6-phosphate + L-glutamate. Catalyzes the first step in hexosamine metabolism, converting fructose-6P into glucosamine-6P using glutamine as a nitrogen source. In Streptococcus pneumoniae (strain ATCC BAA-255 / R6), this protein is Glutamine--fructose-6-phosphate aminotransferase [isomerizing].